The following is a 437-amino-acid chain: Testis-specific Y-encoded-like protein 1 (437 aa).

Residues 1 to 81 (MSGLDGVKRT…QDAAGRGGTP (81 aa)) form a disordered region. Polar residues predominate over residues 11 to 26 (TPLQTHSIIISDQVPS). Residues 28 to 40 (QDAHQYLRLRDQS) show a composition bias toward basic and acidic residues. Lysine 156 participates in a covalent cross-link: Glycyl lysine isopeptide (Lys-Gly) (interchain with G-Cter in SUMO2).

This sequence belongs to the nucleosome assembly protein (NAP) family. Ubiquitinated by the CRL2(APPBP2) complex, which recognizes the Arg-Xaa-Xaa-Gly sequence at the C-terminus, leading to its degradation. As to expression, expressed in testis, ovary, liver, spleen, brain, kidney, prostate, lung, liver, and heart.

It localises to the nucleus. Its subcellular location is the nucleolus. The sequence is that of Testis-specific Y-encoded-like protein 1 (TSPYL1) from Homo sapiens (Human).